Here is a 572-residue protein sequence, read N- to C-terminus: Putative lysozyme-like protein (572 aa).

The signal sequence occupies residues Met1–Ala17. The span at Met145–Gly165 shows a compositional bias: low complexity. 4 disordered regions span residues Met145–Gly199, Ser231–Val297, Ala326–Lys388, and Ala433–Gly469. Gly residues predominate over residues Ser166–Leu185. Low complexity predominate over residues Ser231–Ser240. Gly residues predominate over residues Ser258–Leu282. Over residues Ala326–Gly358 the composition is skewed to low complexity. Residues Ser359 to Leu382 are compositionally biased toward gly residues. Residues Ala433–Gly452 show a composition bias toward low complexity. The segment covering Ser453–Gly469 has biased composition (gly residues).

It belongs to the dictyostelium lysozyme family.

The sequence is that of Putative lysozyme-like protein (alyL) from Dictyostelium discoideum (Social amoeba).